Here is a 659-residue protein sequence, read N- to C-terminus: Interferon-induced GTP-binding protein Mx1 (659 aa).

At Met1 the chain carries N-acetylmethionine. The tract at residues 1–40 is disordered; that stretch reads MVNSKGEITDSDPGSNHLLLNGLPDKAGKNQDTEPENSLC. The 274-residue stretch at 65-338 folds into the Dynamin-type G domain; it reads DLALPAIAVI…LITHICKTLP (274 aa). Residues 75–82 are G1 motif; it reads GDQSSGKS. Position 75–82 (75–82) interacts with GTP; sequence GDQSSGKS. The G2 motif stretch occupies residues 100–102; the sequence is VTR. Residues 176-179 are G3 motif; the sequence is DLPG. GTP contacts are provided by residues 176–180 and 245–248; these read DLPGI and TKPD. The G4 motif stretch occupies residues 245-248; the sequence is TKPD. A G5 motif region spans residues 277–280; it reads KCRG. Residues 339–364 form a bundle signaling element (BSE) region; that stretch reads LLENQIKENHEKITEELKKYGSDVPE. Residues 364–531 form a middle domain region; it reads EEEHEKMFFL…HFQMEQIVYC (168 aa). The tract at residues 365–629 is stalk; the sequence is EEHEKMFFLI…KDTYNWLLKE (265 aa). Positions 552–555 are critical for lipid-binding; that stretch reads KNKK. The GED domain maps to 571-659; it reads LSEIFEHLLA…ARRRLAKFPG (89 aa).

It belongs to the TRAFAC class dynamin-like GTPase superfamily. Dynamin/Fzo/YdjA family. As to quaternary structure, homooligomer. Oligomerizes into multimeric filamentous or ring-like structures by virtue of its stalk domain. Oligomerization is critical for GTPase activity, protein stability, and recognition of viral target structures. Interacts with TRPC1, TRPC3, TRPC4, TRPC5, TRPC6 and TRPC7. Interacts with HSPA5. Interacts with TUBB/TUBB5. Interacts with DDX39A and DDX39B. In terms of processing, ISGylated.

It localises to the cytoplasm. Its subcellular location is the endoplasmic reticulum membrane. The protein localises to the perinuclear region. Its function is as follows. Interferon-induced dynamin-like GTPase with antiviral activity. This chain is Interferon-induced GTP-binding protein Mx1 (MX1), found in Phoca vitulina (Harbor seal).